A 457-amino-acid chain; its full sequence is Exodeoxyribonuclease 7 large subunit (457 aa).

The protein belongs to the XseA family. As to quaternary structure, heterooligomer composed of large and small subunits.

The protein localises to the cytoplasm. The enzyme catalyses Exonucleolytic cleavage in either 5'- to 3'- or 3'- to 5'-direction to yield nucleoside 5'-phosphates.. Functionally, bidirectionally degrades single-stranded DNA into large acid-insoluble oligonucleotides, which are then degraded further into small acid-soluble oligonucleotides. This Escherichia coli O127:H6 (strain E2348/69 / EPEC) protein is Exodeoxyribonuclease 7 large subunit.